A 41-amino-acid chain; its full sequence is MKVRSSLKSLKGRHRDCKMVRRKGVIYIINKTDPRFKAKQG.

It belongs to the bacterial ribosomal protein bL36 family.

This Caulobacter vibrioides (strain ATCC 19089 / CIP 103742 / CB 15) (Caulobacter crescentus) protein is Large ribosomal subunit protein bL36.